The chain runs to 170 residues: Lipoprotein signal peptidase (170 aa).

The next 3 helical transmembrane spans lie at 12–32 (WYWV…WVLA), 67–87 (WQRW…TVWL), and 93–113 (SLLK…GNLV). Residues aspartate 123 and aspartate 141 contribute to the active site. A helical transmembrane segment spans residues 137–157 (FNIADSAIFIGAVLIIWDSFF).

Belongs to the peptidase A8 family.

The protein localises to the cell inner membrane. The enzyme catalyses Release of signal peptides from bacterial membrane prolipoproteins. Hydrolyzes -Xaa-Yaa-Zaa-|-(S,diacylglyceryl)Cys-, in which Xaa is hydrophobic (preferably Leu), and Yaa (Ala or Ser) and Zaa (Gly or Ala) have small, neutral side chains.. The protein operates within protein modification; lipoprotein biosynthesis (signal peptide cleavage). Its function is as follows. This protein specifically catalyzes the removal of signal peptides from prolipoproteins. The polypeptide is Lipoprotein signal peptidase (Shewanella oneidensis (strain ATCC 700550 / JCM 31522 / CIP 106686 / LMG 19005 / NCIMB 14063 / MR-1)).